A 37-amino-acid polypeptide reads, in one-letter code: Large ribosomal subunit protein bL36 (37 aa).

The protein belongs to the bacterial ribosomal protein bL36 family.

This Vibrio atlanticus (strain LGP32) (Vibrio splendidus (strain Mel32)) protein is Large ribosomal subunit protein bL36.